Consider the following 421-residue polypeptide: tRNA (guanine(37)-N(1))-methyltransferase (421 aa).

S-adenosyl-L-methionine-binding positions include Arg-198, 242–243 (DL), 270–271 (DA), and Asn-293.

It belongs to the class I-like SAM-binding methyltransferase superfamily. TRM5/TYW2 family. As to quaternary structure, monomer.

It is found in the mitochondrion matrix. The protein resides in the nucleus. It localises to the cytoplasm. It catalyses the reaction guanosine(37) in tRNA + S-adenosyl-L-methionine = N(1)-methylguanosine(37) in tRNA + S-adenosyl-L-homocysteine + H(+). Specifically methylates the N1 position of guanosine-37 in various cytoplasmic and mitochondrial tRNAs. Methylation is not dependent on the nature of the nucleoside 5' of the target nucleoside. This is the first step in the biosynthesis of wybutosine (yW), a modified base adjacent to the anticodon of tRNAs and required for accurate decoding. The polypeptide is tRNA (guanine(37)-N(1))-methyltransferase (Paramecium tetraurelia).